Consider the following 1644-residue polypeptide: Peroxisome proliferator-activated receptor gamma coactivator-related protein 1 (1644 aa).

Disordered regions lie at residues 1 to 61 (MAAR…DSSF), 170 to 249 (PERD…EVAG), 429 to 616 (LTPK…TSPV), 646 to 761 (AADP…PETP), 773 to 884 (SAPA…QPPG), 978 to 1074 (STVS…EGVV), and 1322 to 1507 (AAPP…NDHY). Residues 12–22 (APPPTGGPGPD) are compositionally biased toward pro residues. Residues 213–222 (SSPKLPSWRP) are compositionally biased toward low complexity. Ser232 is subject to Phosphoserine. The segment at 425 to 460 (IMESLTPKEPQSLPASASQGSQKVPRKGRKKKNKEQ) is necessary for interaction with CREB1 and NRF1 and for transcriptional coactivation. Polar residues predominate over residues 437–446 (LPASASQGSQ). Over residues 448–457 (VPRKGRKKKN) the composition is skewed to basic residues. The segment covering 475–496 (SSRGQSTVSAEVNSQAGSSQKQ) has biased composition (polar residues). Positions 515–524 (RAWARAWAAA) are enriched in low complexity. A Phosphoserine modification is found at Ser541. Polar residues predominate over residues 556–572 (ETSQANPTLSLNDSAQA). Positions 691–702 (DHPKVVSPEGKD) are enriched in basic and acidic residues. Positions 811 to 821 (MVSTHSEQVSS) are enriched in polar residues. Composition is skewed to pro residues over residues 828-864 (VRPP…PLLP) and 874-884 (RLPPPPLQPPG). A phosphoserine mark is found at Ser1059, Ser1393, and Ser1395. Residues 1361-1432 (EASPCRSEMN…SSSSSVSSSS (72 aa)) form a necessary for interaction with CREB1 and NRF1 region. Low complexity-rich tracts occupy residues 1409–1433 (SRSV…SSSR) and 1453–1489 (SSCS…VSPC). In terms of domain architecture, RRM spans 1523–1599 (RVVFIGKIPG…QPFDLCFGGR (77 aa)).

Interacts with CREB1 and NRF1. In terms of tissue distribution, expressed in liver, heart, skeletal muscle, kidney and white and brown adipose tissues.

Its subcellular location is the nucleus. In terms of biological role, acts as a coactivator during transcriptional activation of nuclear genes related to mitochondrial biogenesis and cell growth. Involved in the transcription coactivation of CREB and NRF1 target genes. The protein is Peroxisome proliferator-activated receptor gamma coactivator-related protein 1 (Pprc1) of Mus musculus (Mouse).